A 620-amino-acid chain; its full sequence is Chaperone protein HscA homolog (620 aa).

It belongs to the heat shock protein 70 family.

Functionally, chaperone involved in the maturation of iron-sulfur cluster-containing proteins. Has a low intrinsic ATPase activity which is markedly stimulated by HscB. The protein is Chaperone protein HscA homolog of Acinetobacter baumannii (strain SDF).